The following is a 251-amino-acid chain: Chromobox protein homolog 7 (251 aa).

In terms of domain architecture, Chromo spans 11–69 (FAVESIRKKRVRKGKVEYLVKWKGWPPKYSTWEPEEHILDPRLVMAYEEKEERDRASGY). Residues 190 to 220 (EPAAQPPEEEADADLAEGPPPWTPALPSSEV) are disordered. A required for cellular lifespan extension region spans residues 223–236 (TDITANSITVTFRE).

As to quaternary structure, component of a PRC1-like complex. Interacts with RING1 and RNF2/RING1B, but not with BMI1, EED or EZH2. Interacts with PCGF1, PCGF2, PCGF3, PCGF5 and PCGF6.

It localises to the nucleus. Component of a Polycomb group (PcG) multiprotein PRC1-like complex, a complex class required to maintain the transcriptionally repressive state of many genes, including Hox genes, throughout development. PcG PRC1 complex acts via chromatin remodeling and modification of histones; it mediates monoubiquitination of histone H2A 'Lys-119', rendering chromatin heritably changed in its expressibility. Promotes histone H3 trimethylation at 'Lys-9' (H3K9me3). Binds to trimethylated lysine residues in histones, and possibly also other proteins. Regulator of cellular lifespan by maintaining the repression of CDKN2A, but not by inducing telomerase activity. The protein is Chromobox protein homolog 7 (CBX7) of Homo sapiens (Human).